The chain runs to 869 residues: Rho GTPase-activating protein 27 (869 aa).

The 64-residue stretch at 6–69 (EGDVYVLVEH…PAQYVRELPA (64 aa)) folds into the SH3 domain. Residue Ala28 is modified to Phosphotyrosine. A disordered region spans residues 104–134 (GADGSSAEPRGRASSLCGPARQRTGGQRNSL). A phosphoserine mark is found at Ser155, Ser215, and Ser249. 2 disordered regions span residues 208–300 (RCPP…SGES) and 331–401 (ETEE…GWSC). The span at 209 to 220 (CPPRAESPKQVD) shows a compositional bias: basic and acidic residues. Over residues 235–250 (RATSPRSAAAPPRLSP) the composition is skewed to low complexity. Residues 246–280 (PRLSPVWETHTDTGTGRPYYYNPDTGVTTWESPFE) enclose the WW 1 domain. Positions 283 to 294 (EGTTSPATSRAS) are enriched in polar residues. One can recognise a WW 2 domain in the interval 299–333 (ESLETEWGQYWDEESRRVFFYNPLTGETAWEDETE). Polar residues predominate over residues 345–356 (MQPSLSPRSPGQ). Phosphoserine is present on Ser350. Positions 414–447 (QFTQEQWVRLEDQHGKPYFYNPEDSSVQWELPQV) constitute a WW 3 domain. Disordered stretches follow at residues 449–477 (IPAP…KIKT) and 623–642 (EEDV…GLES). Ser459 and Ser462 each carry phosphoserine. Phosphothreonine is present on Thr464. At Ser469 the chain carries Phosphoserine. The 117-residue stretch at 477-593 (TLDKAGVLHR…WHKAIAEGIS (117 aa)) folds into the PH domain. 2 positions are modified to phosphoserine: Ser632 and Ser636. The 190-residue stretch at 677 to 866 (CALAQLCERE…LILHQCADIF (190 aa)) folds into the Rho-GAP domain.

As to quaternary structure, interacts with SH3KBP1/CIN85. Widely expressed. Highly expressed in kidney, lung, small intestine and thymus.

The protein localises to the cytoplasm. Its subcellular location is the membrane. Rho GTPase-activating protein which may be involved in clathrin-mediated endocytosis. GTPase activators for the Rho-type GTPases act by converting them to an inactive GDP-bound state. Has activity toward CDC42 and RAC1. This chain is Rho GTPase-activating protein 27 (Arhgap27), found in Mus musculus (Mouse).